The following is a 176-amino-acid chain: Shikimate kinase (176 aa).

Residue 10-15 participates in ATP binding; the sequence is TSGKSS. Position 14 (Ser14) interacts with Mg(2+). The substrate site is built by Asp32, Gly81, and Arg138.

It belongs to the shikimate kinase family. Monomer. Requires Mg(2+) as cofactor.

It is found in the cytoplasm. It catalyses the reaction shikimate + ATP = 3-phosphoshikimate + ADP + H(+). Its pathway is metabolic intermediate biosynthesis; chorismate biosynthesis; chorismate from D-erythrose 4-phosphate and phosphoenolpyruvate: step 5/7. Functionally, catalyzes the specific phosphorylation of the 3-hydroxyl group of shikimic acid using ATP as a cosubstrate. This is Shikimate kinase from Chlamydia pneumoniae (Chlamydophila pneumoniae).